Here is a 101-residue protein sequence, read N- to C-terminus: Protein S100-A3 (101 aa).

Ala2 carries the N-acetylalanine modification. EF-hand domains are found at residues 12 to 47 (IVCT…TWTP) and 50 to 85 (FREC…LCLY). Ca(2+)-binding residues include Lys28 and Glu33. Residues Cys30 and Cys68 are joined by a disulfide bond. Residue Arg51 is modified to Citrulline; by PAD3. Asp63, Asn65, Asp67, Glu69, and Glu74 together coordinate Ca(2+). Cys81 and Cys99 form a disulfide bridge. Zn(2+)-binding residues include Cys83, Cys86, His87, and Cys93.

Belongs to the S-100 family. Homodimer and homotetramer for the citrullinated form. More than half of the arginine residues undergo citrullination by PAD1 and PAD2. Arg-51 is specifically citrullinated by PAD3 and promotes tetramerization. Skin specific, specifically expressed at the inner endocuticle of hair fibers.

The protein resides in the cytoplasm. Its function is as follows. Binds both calcium and zinc. May be involved in calcium-dependent cuticle cell differentiation, hair shaft and hair cuticular barrier formation. This Homo sapiens (Human) protein is Protein S100-A3 (S100A3).